The chain runs to 487 residues: Beta-barrel assembly-enhancing protease (487 aa).

The signal sequence occupies residues 1-27 (MFRQLKKNLVATLIAAMTIGQVAPAFA). Histidine 136 provides a ligand contact to Zn(2+). Residue glutamate 137 is part of the active site. Positions 140 and 201 each coordinate Zn(2+). Catalysis depends on aspartate 205, which acts as the Proton donor. TPR repeat units follow at residues 309–342 (RAAQ…EPGN), 344–376 (WYLD…RTNP), 377–409 (VLQL…NKDD), and 427–460 (DQEL…VKLG).

The protein belongs to the peptidase M48 family. BepA subfamily. In terms of assembly, interacts with BamA and LoiP. Zn(2+) serves as cofactor.

It is found in the periplasm. Its activity is regulated as follows. Protease activity is inhibited by the metal chelating reagents 1,10-phenanthroline and EDTA. Its function is as follows. Functions both as a chaperone and a metalloprotease. Maintains the integrity of the outer membrane by promoting either the assembly or the elimination of outer membrane proteins, depending on their folding state. Promotes disulfide rearrangement of LptD during its biogenesis, and proteolytic degradation of LptD and BamA when their proper assembly is compromised. May facilitate membrane attachment of LoiP under unfavorable conditions. The protein is Beta-barrel assembly-enhancing protease of Escherichia coli (strain K12).